We begin with the raw amino-acid sequence, 135 residues long: Protein KRTCAP2 homolog (135 aa).

4 consecutive transmembrane segments (helical) span residues 1–21 (MAVSSGTSGMLATCLFMLLFA), 35–55 (PMAIVGGFLGSVLFILILTAI), 69–89 (TKLIPEVVIALVIAMAASGMV), and 93–113 (CITTCLIFSIVALYYVSRISI).

This sequence belongs to the KRTCAP2 family. Component of the oligosaccharyltransferase (OST) complex.

It localises to the membrane. Functionally, subunit of the oligosaccharyl transferase (OST) complex that catalyzes the initial transfer of a defined glycan (Glc(3)Man(9)GlcNAc(2) in eukaryotes) from the lipid carrier dolichol-pyrophosphate to an asparagine residue within an Asn-X-Ser/Thr consensus motif in nascent polypeptide chains, the first step in protein N-glycosylation. N-glycosylation occurs cotranslationally and the complex associates with the Sec61 complex at the channel-forming translocon complex that mediates protein translocation across the endoplasmic reticulum (ER). All subunits are required for a maximal enzyme activity. This Ixodes scapularis (Black-legged tick) protein is Protein KRTCAP2 homolog.